A 264-amino-acid chain; its full sequence is NADH dehydrogenase [ubiquinone] iron-sulfur protein 3, mitochondrial (264 aa).

The N-terminal 36 residues, 1–36, are a transit peptide targeting the mitochondrion; sequence MAAAAVARLWWRGILGASALTRGTGRPSVLLLPVRR.

It belongs to the complex I 30 kDa subunit family. Core subunit of respiratory chain NADH dehydrogenase (Complex I) which is composed of 45 different subunits. Interacts with NDUFAF3. Interacts with RAB5IF. Found in subcomplexes containing subunits NDUFS2, MT-ND1 and NDUFA13.

It is found in the mitochondrion inner membrane. It catalyses the reaction a ubiquinone + NADH + 5 H(+)(in) = a ubiquinol + NAD(+) + 4 H(+)(out). Functionally, core subunit of the mitochondrial membrane respiratory chain NADH dehydrogenase (Complex I) which catalyzes electron transfer from NADH through the respiratory chain, using ubiquinone as an electron acceptor. Essential for the catalytic activity and assembly of complex I. The polypeptide is NADH dehydrogenase [ubiquinone] iron-sulfur protein 3, mitochondrial (NDUFS3) (Homo sapiens (Human)).